A 465-amino-acid polypeptide reads, in one-letter code: Iron-sulfur cluster assembly SufBD family protein SAUSA300_0822 (465 aa).

This sequence belongs to the iron-sulfur cluster assembly SufBD family.

In Staphylococcus aureus (strain USA300), this protein is Iron-sulfur cluster assembly SufBD family protein SAUSA300_0822.